A 43-amino-acid chain; its full sequence is METATLVAISISRLLVSFTGYALYTAFGQPSEQLRDPFEEHED.

Residues 5–27 (TLVAISISRLLVSFTGYALYTAF) form a helical membrane-spanning segment.

The protein belongs to the PsbN family.

The protein localises to the plastid. It localises to the chloroplast thylakoid membrane. In terms of biological role, may play a role in photosystem I and II biogenesis. The sequence is that of Protein PsbN from Cycas taitungensis (Prince sago).